The chain runs to 156 residues: MSETDLLLKMVRQPVKLYSVATLFHEFSEVITKLEHSVQKEPTSLLSEENWHKQFLKFAQALPAHGSASWLNLDDALQAVVGNSRSAFLHQLIAKLKSRHLQVLELNKIGSEPLDLSNLPAPFYVLLPESFAARITLLVQDKALPYVRVSFEYWHA.

This is an uncharacterized protein from Haemophilus influenzae (strain ATCC 51907 / DSM 11121 / KW20 / Rd).